The following is a 259-amino-acid chain: Deoxyribose-phosphate aldolase (259 aa).

Asp-102 acts as the Proton donor/acceptor in catalysis. Catalysis depends on Lys-167, which acts as the Schiff-base intermediate with acetaldehyde. Lys-201 (proton donor/acceptor) is an active-site residue.

It belongs to the DeoC/FbaB aldolase family. DeoC type 2 subfamily.

The protein localises to the cytoplasm. The catalysed reaction is 2-deoxy-D-ribose 5-phosphate = D-glyceraldehyde 3-phosphate + acetaldehyde. It participates in carbohydrate degradation; 2-deoxy-D-ribose 1-phosphate degradation; D-glyceraldehyde 3-phosphate and acetaldehyde from 2-deoxy-alpha-D-ribose 1-phosphate: step 2/2. Catalyzes a reversible aldol reaction between acetaldehyde and D-glyceraldehyde 3-phosphate to generate 2-deoxy-D-ribose 5-phosphate. The sequence is that of Deoxyribose-phosphate aldolase from Photorhabdus laumondii subsp. laumondii (strain DSM 15139 / CIP 105565 / TT01) (Photorhabdus luminescens subsp. laumondii).